Consider the following 379-residue polypeptide: Heme A synthase (379 aa).

Residues 1–28 (MAGSRSIFEEVQDSQKPAAMPGGVSRDR) form a disordered region. The next 8 membrane-spanning stretches (helical) occupy residues 35–55 (VRVFIMILFVMVVVQIAIGGL), 124–144 (FLGVVWAVGFVGLLATKSVPV), 150–170 (LLLLGVLGGLQGVAGWWMVHS), 183–203 (RLAVHLGLAFLILGLMAWYIL), 227–247 (ATGLLHLTALQILIGALVAGI), 287–307 (FFHRVTGYLLFVIGVAAWIMA), 318–338 (AFDWMAVMLFGQIVLGIMTVM), and 341–361 (SPWYLAIVHQFGAVVLITLIL). A heme-binding site is contributed by His-289. A heme-binding site is contributed by His-349.

This sequence belongs to the COX15/CtaA family. Type 2 subfamily. As to quaternary structure, interacts with CtaB. Heme b is required as a cofactor.

The protein localises to the cell membrane. The catalysed reaction is Fe(II)-heme o + 2 A + H2O = Fe(II)-heme a + 2 AH2. It functions in the pathway porphyrin-containing compound metabolism; heme A biosynthesis; heme A from heme O: step 1/1. Its function is as follows. Catalyzes the conversion of heme O to heme A by two successive hydroxylations of the methyl group at C8. The first hydroxylation forms heme I, the second hydroxylation results in an unstable dihydroxymethyl group, which spontaneously dehydrates, resulting in the formyl group of heme A. This chain is Heme A synthase, found in Jannaschia sp. (strain CCS1).